We begin with the raw amino-acid sequence, 209 residues long: Uracil phosphoribosyltransferase (209 aa).

5-phospho-alpha-D-ribose 1-diphosphate-binding positions include arginine 79, arginine 104, and 131–139 (DPMLATGGS). Uracil-binding positions include isoleucine 194 and 199–201 (GDA). Aspartate 200 serves as a coordination point for 5-phospho-alpha-D-ribose 1-diphosphate.

It belongs to the UPRTase family. Mg(2+) serves as cofactor.

The enzyme catalyses UMP + diphosphate = 5-phospho-alpha-D-ribose 1-diphosphate + uracil. Its pathway is pyrimidine metabolism; UMP biosynthesis via salvage pathway; UMP from uracil: step 1/1. With respect to regulation, allosterically activated by GTP. In terms of biological role, catalyzes the conversion of uracil and 5-phospho-alpha-D-ribose 1-diphosphate (PRPP) to UMP and diphosphate. This Clostridium tetani (strain Massachusetts / E88) protein is Uracil phosphoribosyltransferase.